We begin with the raw amino-acid sequence, 267 residues long: X-box-binding protein 1 (267 aa).

Over 1-180 (MVVVAAAPSA…VQAQLSPPQN (180 aa)) the chain is Cytoplasmic. The interval 35–56 (VPGPRAAGSEASGTPQARKRQR) is disordered. Ser61 bears the Phosphoserine mark. In terms of domain architecture, bZIP spans 63–126 (EEKALRRKLK…HGLVVENQEL (64 aa)). Residues 65-87 (KALRRKLKNRVAAQTARDRKKAR) form a basic motif region. The nuclear localization signal (NLS) stretch occupies residues 69 to 85 (RKLKNRVAAQTARDRKK). Residues 91-126 (LEQQVVDLEEENHKLQLENQLLREKTHGLVVENQEL) are leucine-zipper. The helical; Signal-anchor for type II membrane protein transmembrane segment at 181 to 198 (IFPWTLTLLPLQILSLIS) threads the bilayer. The Lumenal portion of the chain corresponds to 199–267 (FWAFWTSWTL…FVLTMYTPSL (69 aa)). Positions 230–256 (QKDLVPYQPPFLCQWGPHQPSWKPLMN) are necessary for the translational pausing of its own mRNA.

It belongs to the bZIP family. As to quaternary structure, isoform 1 interacts with HM13. Isoform 1 interacts with RNF139; the interaction induces ubiquitination and degradation of isoform 1. Isoform 1 interacts (via luminal domain) with DERL1; the interaction obviates the need for ectodomain shedding prior HM13/SPP-mediated XBP1 isoform 1 cleavage. Isoform 1 interacts with isoform 2; the interaction sequesters isoform 2 from the nucleus and enhances isoform 2 degradation in the cytoplasm. Isoform 1 interacts with HDAC3 and AKT1; the interactions occur in endothelial cell (EC) under disturbed flow. Isoform 1 interacts with the oncoprotein FOS. Isoform 2 interacts with ATF6; the interaction occurs in a ER stress-dependent manner and is required for DNA binding to the unfolded protein response element (UPRE). Isoform 2 interacts with PIK3R1; the interaction is direct and induces translocation of XBP1 isoform 2 into the nucleus and the unfolded protein response (UPR) XBP1-dependent target genes activation in a ER stress- and/or insulin-dependent but PI3K-independent manner. Isoform 2 interacts with SIRT1. Isoform 2 interacts with PIK3R1 and PIK3R2; the interactions are direct and induce translocation of XBP1 isoform 2 into the nucleus and the unfolded protein response (UPR) XBP1-dependent target genes activation in a ER stress- and/or insulin-dependent but PI3K-independent manner. Isoform 2 interacts with FOXO1; the interaction is direct and leads to FOXO1 ubiquitination and degradation via the proteasome pathway in hepatocytes. Acetylated by EP300; acetylation positively regulates the transcriptional activity of XBP1 isoform 2. Isoform 2 is deacetylated by SIRT1; deacetylation negatively regulates the transcriptional activity of XBP1 isoform 2. Post-translationally, ubiquitinated, leading to proteasomal degradation in response to ER stress. In terms of processing, X-box-binding protein 1, cytoplasmic form and luminal form are produced by intramembrane proteolytic cleavage of ER membrane-anchored isoform 1 triggered by HM13/SPP in a DERL1-RNF139-dependent and VCP/p97-independent manner. X-box-binding protein 1, luminal form is ubiquitinated leading to proteasomal degradation. In terms of tissue distribution, isoform 1 and isoform 2 are expressed at higher level in branch curves of vessel walls and in atherosclerotic plaques relative to healthy segments of the same aortas (at protein level). Expressed in skeletal muscles, plasma cells and pancreatic beta cells. Isoform 1 and isoform 2 are expressed in gonadal adipose tissue. Isoform 1 is expressed in inguinal adipose tissue.

It is found in the endoplasmic reticulum. The protein resides in the nucleus. It localises to the cytoplasm. The protein localises to the endoplasmic reticulum membrane. Its subcellular location is the membrane. Functionally, functions as a transcription factor during endoplasmic reticulum stress by regulating the unfolded protein response (UPR). Required for cardiac myogenesis and hepatogenesis during embryonic development and the development of secretory tissues such as exocrine pancreas and salivary gland. Involved in differentiation of B lymphocytes to plasma cells and production of immunoglobulins. Modulates the cellular response to ER stress in a PIK3R-dependent manner. Binds to the cis-acting X box present in the promoter regions of major histocompatibility complex class II genes. Involved in VEGF-induced endothelial cell (EC) proliferation and retinal blood vessel formation during embryonic development but also for angiogenesis in adult tissues under ischemic conditions. Also functions as a major regulator of the UPR in obesity-induced insulin resistance and type 2 diabetes for the management of obesity and diabetes prevention. Plays a role in the unconventional cytoplasmic splicing processing of its own mRNA triggered by the endoplasmic reticulum (ER) transmembrane endoribonuclease ERN1: upon ER stress, the emerging XBP1 polypeptide chain, as part of a mRNA-ribosome-nascent chain (R-RNC) complex, cotranslationally recruits its own unprocessed mRNA through transient docking to the ER membrane and translational pausing, therefore facilitating efficient IRE1-mediated XBP1 mRNA isoform 2 production. In endothelial cells (EC), associated with KDR, promotes IRE1-mediated XBP1 mRNA isoform 2 production in a vascular endothelial growth factor (VEGF)-dependent manner, leading to EC proliferation and angiogenesis. Functions as a negative feed-back regulator of the potent transcription factor XBP1 isoform 2 protein levels through proteasome-mediated degradation, thus preventing the constitutive activation of the ER stress response signaling pathway. Inhibits the transactivation activity of XBP1 isoform 2 in myeloma cells. Acts as a weak transcriptional factor. Together with HDAC3, contributes to the activation of NFE2L2-mediated HMOX1 transcription factor gene expression in a PI(3)K/mTORC2/Akt-dependent signaling pathway leading to EC survival under disturbed flow/oxidative stress. Binds to the ER stress response element (ERSE) upon ER stress. Binds to the consensus 5'-GATGACGTG[TG]N(3)[AT]T-3' sequence related to cAMP responsive element (CRE)-like sequences. Binds the Tax-responsive element (TRE) present in the long terminal repeat (LTR) of T-cell leukemia virus type 1 (HTLV-I) and to the TPA response elements (TRE). Associates preferentially to the HDAC3 gene promoter region in a static flow-dependent manner. Binds to the CDH5/VE-cadherin gene promoter region. In terms of biological role, functions as a stress-inducible potent transcriptional activator during endoplasmic reticulum (ER) stress by inducing unfolded protein response (UPR) target genes via binding to the UPR element (UPRE). Up-regulates target genes encoding ER chaperones and ER-associated degradation (ERAD) components to enhance the capacity of productive folding and degradation mechanism, respectively, in order to maintain the homeostasis of the ER under ER stress. Plays a role in the production of immunoglobulins and interleukin-6 in the presence of stimuli required for plasma cell differentiation, and promotes as well membrane phospholipid biosynthesis necessary for ER expansion. Contributes to the VEGF-induced endothelial cell (EC) growth and proliferation in a Akt/GSK-dependent and/or -independent signaling pathway, respectively, leading to beta-catenin nuclear translocation and E2F2 gene expression. Promotes umbilical vein EC apoptosis and atherosclerotisis development in a caspase-dependent signaling pathway, and contributes to VEGF-induced EC proliferation and angiogenesis in adult tissues under ischemic conditions. Involved in the regulation of endostatin-induced autophagy in EC through BECN1 transcriptional activation. Plays a role as an oncogene by promoting tumor progression: stimulates zinc finger protein SNAI1 transcription to induce epithelial-to-mesenchymal (EMT) transition, cell migration and invasion of breast cancer cells. Involved in adipocyte differentiation by regulating lipogenic gene expression during lactation. Plays a role in the survival of both dopaminergic neurons of the substantia nigra pars compacta (SNpc), by maintaining protein homeostasis and of myeloma cells. Increases insulin sensitivity in the liver as a response to a high carbohydrate diet, resulting in improved glucose tolerance. Also improves glucose homeostasis in an ER stress- and/or insulin-independent manner through both binding and proteasome-induced degradation of the transcription factor FOXO1, hence resulting in suppression of gluconeogenic genes expression and in a reduction of blood glucose levels. Controls the induction of de novo fatty acid synthesis in hepatocytes by regulating the expression of a subset of lipogenic genes in an ER stress- and UPR-independent manner. Binds to the 5'-CCACG-3' motif in the PPARG promoter. Associates preferentially to the HDAC3 gene promoter region in a disturbed flow-dependent manner. Binds to the BECN1 gene promoter region. Binds to the CDH5/VE-cadherin gene promoter region. Binds to the ER stress response element (ERSE) upon ER stress. This chain is X-box-binding protein 1, found in Mus musculus (Mouse).